The following is a 409-amino-acid chain: Argininosuccinate synthase (409 aa).

ATP is bound by residues alanine 13–serine 21 and alanine 40. L-citrulline is bound by residues tyrosine 91 and serine 96. Glycine 121 contributes to the ATP binding site. L-aspartate contacts are provided by threonine 123, asparagine 127, and aspartate 128. Asparagine 127 contacts L-citrulline. L-citrulline-binding residues include arginine 131, serine 183, serine 192, glutamate 268, and tyrosine 280.

The protein belongs to the argininosuccinate synthase family. Type 1 subfamily. In terms of assembly, homotetramer.

It is found in the cytoplasm. It catalyses the reaction L-citrulline + L-aspartate + ATP = 2-(N(omega)-L-arginino)succinate + AMP + diphosphate + H(+). Its pathway is amino-acid biosynthesis; L-arginine biosynthesis; L-arginine from L-ornithine and carbamoyl phosphate: step 2/3. The chain is Argininosuccinate synthase from Saccharophagus degradans (strain 2-40 / ATCC 43961 / DSM 17024).